The following is a 317-amino-acid chain: Peroxidase 22.3 (317 aa).

The N-terminal stretch at 1 to 25 (MASATNSSLSLMLLVAAAMASVASA) is a signal peptide. A Pyrrolidone carboxylic acid modification is found at glutamine 26. Cystine bridges form between cysteine 36-cysteine 111 and cysteine 69-cysteine 74. Histidine 67 serves as the catalytic Proton acceptor. Aspartate 68, valine 71, glycine 73, aspartate 75, and serine 77 together coordinate Ca(2+). N-linked (GlcNAc...) asparagine glycosylation occurs at asparagine 112. Intrachain disulfides connect cysteine 117/cysteine 312 and cysteine 196/cysteine 221. Proline 159 is a binding site for substrate. Asparagine 171 is a glycosylation site (N-linked (GlcNAc...) asparagine). Histidine 189 provides a ligand contact to heme b. Threonine 190 lines the Ca(2+) pocket. Residue asparagine 205 is glycosylated (N-linked (GlcNAc...) asparagine). Ca(2+) contacts are provided by aspartate 236, threonine 239, and aspartate 244.

Belongs to the peroxidase family. Classical plant (class III) peroxidase subfamily. Heme b serves as cofactor. Ca(2+) is required as a cofactor.

The protein resides in the secreted. The catalysed reaction is H2O2 + AH2 = A + 2 H2O. Its function is as follows. Removal of H(2)O(2), oxidation of toxic reductants, biosynthesis and degradation of lignin, suberization, auxin catabolism, response to environmental stresses such as wounding, pathogen attack and oxidative stress. These functions might be dependent on each isozyme/isoform in each plant tissue. The polypeptide is Peroxidase 22.3 (Oryza sativa subsp. japonica (Rice)).